Consider the following 286-residue polypeptide: F-box/SPRY domain-containing protein 1 (286 aa).

Ala-2 is subject to N-acetylalanine. In terms of domain architecture, F-box spans 33 to 82 (AGAGGRLPSRVLELVFSYLELSELRSCALVCKHWYRCLHGDENSEVWRSL). The B30.2/SPRY domain maps to 92-284 (LRTDILCNLP…VTLVYLGKPL (193 aa)).

It belongs to the FBXO45/Fsn family. As to quaternary structure, forms a complex with MYCBP2 and SKP1. Interacts with HEY1; leading to FBXO45 nuclear translocation. Interacts (via SPRY domain) with CDH2.

The protein resides in the secreted. Its subcellular location is the postsynaptic cell membrane. It localises to the presynaptic cell membrane. The protein localises to the nucleus. It functions in the pathway protein modification; protein ubiquitination. Its function is as follows. Component of E3 ubiquitin ligase complex consisting of FBXO45, MYCBP2 and SKP1. Functions in substrate recognition but also plays an important role in assembly of the complex. Required for normal neuromuscular synaptogenesis, axon pathfinding and neuronal migration. Regulates neuron migration during brain development through interaction with N-cadherin/CDH2 after secretion via a non-classical mechanism. Plays a role in the regulation of neurotransmission at mature neurons. May control synaptic activity by controlling UNC13A via ubiquitin dependent pathway. Specifically recognizes TP73, promoting its ubiquitination and degradation. Polyubiquitinates NMNAT2, an adenylyltransferase that acts as an axon maintenance factor, and regulates its stability and degradation by the proteasome. Also acts by ubiquitinating FBXW7 during prolonged mitotic arrest and promotes FBXW7 proteasomal degradation. Induces subsequently an increase in mitotic slippage and prevents mitotic cell death. In response to influenza infection, mediates interferon-lambda receptor IFNLR1 polyubiquitination and degradation through the ubiquitin-proteasome system by docking with its intracellular receptor domain. The chain is F-box/SPRY domain-containing protein 1 (FBXO45) from Homo sapiens (Human).